A 266-amino-acid polypeptide reads, in one-letter code: DNA damage-regulated autophagy modulator protein 2 (266 aa).

Helical transmembrane passes span 8–28 (LSFL…FSYI), 53–73 (KCLF…TIYV), 88–108 (IIKL…GLSI), 118–138 (FAAH…YMFV), 160–180 (LLLV…SSVL), and 207–227 (ITTA…LTYI).

Belongs to the DRAM/TMEM150 family. In terms of tissue distribution, expression is down-regulated in ovarian tumors (at protein level). Widely expressed with highest levels in placenta and heart. Expressed in the retina. Not detected in brain or thymus.

Its subcellular location is the lysosome membrane. It is found in the photoreceptor inner segment. The protein localises to the apical cell membrane. Functionally, plays a role in the initiation of autophagy. In the retina, might be involved in the process of photoreceptor cells renewal and recycling to preserve visual function. Induces apoptotic cell death when coexpressed with DRAM1. The chain is DNA damage-regulated autophagy modulator protein 2 (DRAM2) from Homo sapiens (Human).